Reading from the N-terminus, the 436-residue chain is GTPase Der (436 aa).

2 consecutive EngA-type G domains span residues Pro-4–Glu-167 and Ile-176–Ser-351. Residues Gly-10–Ser-17, Asp-57–Ile-61, Asn-119–Asp-122, Gly-182–Ser-189, Asp-229–Met-233, and Asn-294–Asp-297 each bind GTP. Residues Ile-352–Asp-436 enclose the KH-like domain.

The protein belongs to the TRAFAC class TrmE-Era-EngA-EngB-Septin-like GTPase superfamily. EngA (Der) GTPase family. In terms of assembly, associates with the 50S ribosomal subunit.

Functionally, GTPase that plays an essential role in the late steps of ribosome biogenesis. In Bacillus cereus (strain ATCC 10987 / NRS 248), this protein is GTPase Der.